We begin with the raw amino-acid sequence, 389 residues long: PqqA peptide cyclase (389 aa).

Positions 20-235 (VGLPLWLLAE…TNEYRARLEA (216 aa)) constitute a Radical SAM core domain. Positions 34, 38, and 41 each coordinate [4Fe-4S] cluster.

Belongs to the radical SAM superfamily. PqqE family. Interacts with PqqD. The interaction is necessary for activity of PqqE. It depends on [4Fe-4S] cluster as a cofactor.

It carries out the reaction [PQQ precursor protein] + S-adenosyl-L-methionine = E-Y cross-linked-[PQQ precursor protein] + 5'-deoxyadenosine + L-methionine + H(+). It functions in the pathway cofactor biosynthesis; pyrroloquinoline quinone biosynthesis. Its function is as follows. Catalyzes the cross-linking of a glutamate residue and a tyrosine residue in the PqqA protein as part of the biosynthesis of pyrroloquinoline quinone (PQQ). In Pseudomonas fluorescens (strain ATCC BAA-477 / NRRL B-23932 / Pf-5), this protein is PqqA peptide cyclase.